A 287-amino-acid chain; its full sequence is Beta-lactamase GES-1 (287 aa).

The signal sequence occupies residues 1-18 (MRFIHALLLAGIAHSAYA). Cys-63 and Cys-233 are oxidised to a cystine. Catalysis depends on Ser-64, which acts as the Nucleophile; acyl-ester intermediate. Lys-67, Ser-125, Glu-161, and Thr-232 together coordinate a beta-lactam.

Belongs to the class-A beta-lactamase family. As to quaternary structure, monomer. May form dimers.

The catalysed reaction is a beta-lactam + H2O = a substituted beta-amino acid. With respect to regulation, inhibited by the beta-lactamase-blocking agents clavulanic acid, tazobactam, sulbactam and tazobactam and the carbapenem, imipenem. Inhibition by imipenem may involve Gly-165. In terms of biological role, extended-spectrum beta-lactamase (ESBL) which confers resistance to penicillins, as well as first, second, third and fourth-generation cephalosporins. Has ceftazidime-hydrolyzing activity. Inactive against the carbapenems, imipenem, meropenem, ertapenem and doripenem. However, weak hydrolytic activity with respect to imipenem has also been reported. The sequence is that of Beta-lactamase GES-1 from Klebsiella pneumoniae.